The sequence spans 159 residues: Cytochrome c-type biogenesis protein CcmE (159 aa).

Over 1-23 (MNNSSLENSASLKVILKQRKKKR) the chain is Cytoplasmic. A helical; Signal-anchor for type II membrane protein membrane pass occupies residues 24–44 (LLIILLCCLVMAIAASLVVYA). At 45–159 (MRHAVSFFRM…RLKKHYSVEK (115 aa)) the chain is on the periplasmic side. Positions 138 and 142 each coordinate heme.

It belongs to the CcmE/CycJ family.

The protein resides in the cell inner membrane. Functionally, heme chaperone required for the biogenesis of c-type cytochromes. Transiently binds heme delivered by CcmC and transfers the heme to apo-cytochromes in a process facilitated by CcmF and CcmH. In Bartonella tribocorum (strain CIP 105476 / IBS 506), this protein is Cytochrome c-type biogenesis protein CcmE.